Reading from the N-terminus, the 170-residue chain is Lipoprotein signal peptidase (170 aa).

3 consecutive transmembrane segments (helical) span residues W12–A32, W67–L87, and S93–I113. Catalysis depends on residues D123 and D141. Residues F137 to F157 traverse the membrane as a helical segment.

Belongs to the peptidase A8 family.

It localises to the cell inner membrane. The enzyme catalyses Release of signal peptides from bacterial membrane prolipoproteins. Hydrolyzes -Xaa-Yaa-Zaa-|-(S,diacylglyceryl)Cys-, in which Xaa is hydrophobic (preferably Leu), and Yaa (Ala or Ser) and Zaa (Gly or Ala) have small, neutral side chains.. It functions in the pathway protein modification; lipoprotein biosynthesis (signal peptide cleavage). This protein specifically catalyzes the removal of signal peptides from prolipoproteins. The polypeptide is Lipoprotein signal peptidase (Shewanella sp. (strain MR-4)).